A 455-amino-acid polypeptide reads, in one-letter code: Fumarate hydratase class II (455 aa).

Residues serine 96–threonine 98, histidine 122–aspartate 125, serine 132–asparagine 134, and threonine 180 each bind substrate. Histidine 181 (proton donor/acceptor) is an active-site residue. The active site involves serine 311. Substrate contacts are provided by residues serine 312 and lysine 317 to asparagine 319.

The protein belongs to the class-II fumarase/aspartase family. Fumarase subfamily. Homotetramer.

Its subcellular location is the cytoplasm. It catalyses the reaction (S)-malate = fumarate + H2O. It functions in the pathway carbohydrate metabolism; tricarboxylic acid cycle; (S)-malate from fumarate: step 1/1. Functionally, involved in the TCA cycle. Catalyzes the stereospecific interconversion of fumarate to L-malate. This is Fumarate hydratase class II from Listeria monocytogenes serotype 4b (strain F2365).